Here is a 231-residue protein sequence, read N- to C-terminus: Protein FMP52, mitochondrial (231 aa).

The N-terminal 44 residues, 1–44 (MNGLVLGATGLCGGGFLRHAQEAPQFSKVYAILRRELPFPATDK), are a transit peptide targeting the mitochondrion.

This sequence belongs to the FMP52 family.

The protein localises to the mitochondrion outer membrane. The protein is Protein FMP52, mitochondrial (FMP52) of Saccharomyces cerevisiae (strain ATCC 204508 / S288c) (Baker's yeast).